We begin with the raw amino-acid sequence, 185 residues long: Glycine-rich cell wall structural protein 2 (185 aa).

The first 27 residues, 1-27, serve as a signal peptide directing secretion; that stretch reads MATTKHLALAILVLLSIGMTTSARTLL. The disordered stretch occupies residues 149–185; it reads GYGSGGGGGGGGGQGGGSGSGSGSGYGSGSGGGNGHH.

The protein resides in the secreted. It localises to the cell wall. Its function is as follows. Responsible for plasticity of the cell wall. This is Glycine-rich cell wall structural protein 2 (GRP0.9) from Oryza sativa subsp. indica (Rice).